A 23-amino-acid chain; its full sequence is M-poneritoxin-Nc1a (23 aa).

Belongs to the non-disulfide-bridged peptide (NDBP) superfamily. Medium-length antimicrobial peptide (group 3) family. Ponericin-W subfamily. In terms of tissue distribution, expressed by the venom gland.

It is found in the secreted. The protein localises to the target cell membrane. Functionally, membrane-perturbating peptide with multiple activities. It is insecticidal, since it induces contractile paralysis in insects (L.cuprina) during several hours, and death after 24 hours. It shows antibacterial activity with higher activity against Gram-positive than Gram-negative bacteria. It is also antiparasitic, since it potently inhibits the larval development of the major pathogenic nematode of ruminants (H.contortus, IC(50)=5.1 uM), but fails to reduce the motility of adult males of the other nematode B.malayi. It also shows cytotoxic activity against HEK293 cells (EC(50)=12-14 uM) and induces hemolysis in human erythrocytes (EC(50)=28.6-48.2 uM). In addition, it causes an important increase in intracellular calcium concentration on neuronal and epithelial cell lines, which supports a non-specific membrane perturbation mechanism of action. In vivo, it induces pain by intraplantar injection into mice, suggesting a defensive function against vertebrate predators. In Neoponera commutata (Large hunting ant), this protein is M-poneritoxin-Nc1a.